The following is a 162-amino-acid chain: Probable chemoreceptor glutamine deamidase CheD (162 aa).

The protein belongs to the CheD family.

It catalyses the reaction L-glutaminyl-[protein] + H2O = L-glutamyl-[protein] + NH4(+). Probably deamidates glutamine residues to glutamate on methyl-accepting chemotaxis receptors (MCPs), playing an important role in chemotaxis. This Pyrococcus horikoshii (strain ATCC 700860 / DSM 12428 / JCM 9974 / NBRC 100139 / OT-3) protein is Probable chemoreceptor glutamine deamidase CheD.